The sequence spans 819 residues: Leucine--tRNA ligase (819 aa).

Positions 41–51 (PYPSGTLHVGH) match the 'HIGH' region motif. A 'KMSKS' region motif is present at residues 578–582 (KMSKS). An ATP-binding site is contributed by K581.

The protein belongs to the class-I aminoacyl-tRNA synthetase family.

The protein localises to the cytoplasm. It carries out the reaction tRNA(Leu) + L-leucine + ATP = L-leucyl-tRNA(Leu) + AMP + diphosphate. In Fervidobacterium nodosum (strain ATCC 35602 / DSM 5306 / Rt17-B1), this protein is Leucine--tRNA ligase.